Reading from the N-terminus, the 374-residue chain is Serpin B8 (374 aa).

It belongs to the serpin family. Ov-serpin subfamily.

It is found in the cytoplasm. Functionally, has an important role in epithelial desmosome-mediated cell-cell adhesion. This chain is Serpin B8 (SERPINB8), found in Homo sapiens (Human).